We begin with the raw amino-acid sequence, 628 residues long: UvrABC system protein C (628 aa).

The GIY-YIG domain occupies threonine 20–valine 99. Positions alanine 209–leucine 244 constitute a UVR domain.

The protein belongs to the UvrC family. As to quaternary structure, interacts with UvrB in an incision complex.

Its subcellular location is the cytoplasm. Its function is as follows. The UvrABC repair system catalyzes the recognition and processing of DNA lesions. UvrC both incises the 5' and 3' sides of the lesion. The N-terminal half is responsible for the 3' incision and the C-terminal half is responsible for the 5' incision. The protein is UvrABC system protein C of Gloeobacter violaceus (strain ATCC 29082 / PCC 7421).